Reading from the N-terminus, the 307-residue chain is HPr kinase/phosphorylase (307 aa).

Residues histidine 136 and lysine 157 contribute to the active site. 151–158 serves as a coordination point for ATP; that stretch reads GESGIGKS. Residue serine 158 participates in Mg(2+) binding. The active-site Proton acceptor; for phosphorylation activity. Proton donor; for dephosphorylation activity is aspartate 175. The tract at residues 198–207 is important for the catalytic mechanism of both phosphorylation and dephosphorylation; sequence LEVRGMGIID. Position 199 (glutamate 199) interacts with Mg(2+). Arginine 240 is an active-site residue. An important for the catalytic mechanism of dephosphorylation region spans residues 261–266; that stretch reads PIRPGR.

The protein belongs to the HPrK/P family. In terms of assembly, homohexamer. The cofactor is Mg(2+).

The catalysed reaction is [HPr protein]-L-serine + ATP = [HPr protein]-O-phospho-L-serine + ADP + H(+). It catalyses the reaction [HPr protein]-O-phospho-L-serine + phosphate + H(+) = [HPr protein]-L-serine + diphosphate. Functionally, catalyzes the ATP- as well as the pyrophosphate-dependent phosphorylation of a specific serine residue in HPr, a phosphocarrier protein of the phosphoenolpyruvate-dependent sugar phosphotransferase system (PTS). HprK/P also catalyzes the pyrophosphate-producing, inorganic phosphate-dependent dephosphorylation (phosphorolysis) of seryl-phosphorylated HPr (P-Ser-HPr). The two antagonistic activities of HprK/P are regulated by several intracellular metabolites, which change their concentration in response to the absence or presence of rapidly metabolisable carbon sources (glucose, fructose, etc.) in the growth medium. Therefore, by controlling the phosphorylation state of HPr, HPrK/P is a sensor enzyme that plays a major role in the regulation of carbon metabolism and sugar transport: it mediates carbon catabolite repression (CCR), and regulates PTS-catalyzed carbohydrate uptake and inducer exclusion. The sequence is that of HPr kinase/phosphorylase from Clostridium perfringens (strain ATCC 13124 / DSM 756 / JCM 1290 / NCIMB 6125 / NCTC 8237 / Type A).